Reading from the N-terminus, the 565-residue chain is NAD-dependent malic enzyme (565 aa).

Catalysis depends on Tyr-104, which acts as the Proton donor. Arg-157 serves as a coordination point for NAD(+). Lys-175 acts as the Proton acceptor in catalysis. 3 residues coordinate a divalent metal cation: Glu-246, Asp-247, and Asp-270. NAD(+) is bound by residues Asp-270 and Asn-418.

It belongs to the malic enzymes family. In terms of assembly, homotetramer. Requires Mg(2+) as cofactor. It depends on Mn(2+) as a cofactor.

The enzyme catalyses (S)-malate + NAD(+) = pyruvate + CO2 + NADH. The catalysed reaction is oxaloacetate + H(+) = pyruvate + CO2. This chain is NAD-dependent malic enzyme, found in Escherichia coli O127:H6 (strain E2348/69 / EPEC).